The primary structure comprises 275 residues: Biotin synthase (275 aa).

One can recognise a Radical SAM core domain in the interval 1 to 217 (MLCAICNVSS…DTAKTLPQCR (217 aa)). Residues Cys13, Cys17, and Cys20 each coordinate [4Fe-4S] cluster. 4 residues coordinate [2Fe-2S] cluster: Cys57, Cys92, Cys150, and Arg217.

The protein belongs to the radical SAM superfamily. Biotin synthase family. As to quaternary structure, homodimer. [4Fe-4S] cluster is required as a cofactor. The cofactor is [2Fe-2S] cluster.

It carries out the reaction (4R,5S)-dethiobiotin + (sulfur carrier)-SH + 2 reduced [2Fe-2S]-[ferredoxin] + 2 S-adenosyl-L-methionine = (sulfur carrier)-H + biotin + 2 5'-deoxyadenosine + 2 L-methionine + 2 oxidized [2Fe-2S]-[ferredoxin]. The protein operates within cofactor biosynthesis; biotin biosynthesis; biotin from 7,8-diaminononanoate: step 2/2. In terms of biological role, catalyzes the conversion of dethiobiotin (DTB) to biotin by the insertion of a sulfur atom into dethiobiotin via a radical-based mechanism. The polypeptide is Biotin synthase (Campylobacter fetus subsp. fetus (strain 82-40)).